A 296-amino-acid chain; its full sequence is Cobalamin trafficking protein CblD (296 aa).

A mitochondrion-targeting transit peptide spans 1-38 (MAHVLCNRARLVSYLPGFCSLVKRVINPRAFSTAGSSG). An N6-acetyllysine modification is found at Lys-203.

Heterodimer with MMACHC. Forms a multiprotein complex with MMACHC, MTR and MTRR.

The protein localises to the cytoplasm. It localises to the mitochondrion. Its function is as follows. Involved in cobalamin metabolism and trafficking. Plays a role in regulating the biosynthesis and the proportion of two coenzymes, methylcob(III)alamin (MeCbl) and 5'-deoxyadenosylcobalamin (AdoCbl). Promotes oxidation of cob(II)alamin bound to MMACHC. The processing of cobalamin in the cytosol occurs in a multiprotein complex composed of at least MMACHC, MMADHC, MTRR (methionine synthase reductase) and MTR (methionine synthase) which may contribute to shuttle safely and efficiently cobalamin towards MTR in order to produce methionine. In Rattus norvegicus (Rat), this protein is Cobalamin trafficking protein CblD (Mmadhc).